The primary structure comprises 123 residues: Large ribosomal subunit protein bL12 (123 aa).

It belongs to the bacterial ribosomal protein bL12 family. Homodimer. Part of the ribosomal stalk of the 50S ribosomal subunit. Forms a multimeric L10(L12)X complex, where L10 forms an elongated spine to which 2 to 4 L12 dimers bind in a sequential fashion. Binds GTP-bound translation factors.

Functionally, forms part of the ribosomal stalk which helps the ribosome interact with GTP-bound translation factors. Is thus essential for accurate translation. This chain is Large ribosomal subunit protein bL12, found in Neisseria perflava.